Consider the following 1592-residue polypeptide: MAFWLPQNIQKRLLLYVLQQISLFSNIDLSNLDVSIGSKSHFSFHDVNLSLDDLNIPNVQINEGIVDELVLKLTVSGGVEIDGSGLRFIMTPLYSSGSQELHSDFLVKSIQDLTNSMLQFSDPLTTYNRYKEDDISSSDSSSDLNSNIEASKPAANGSYTLQNMRNKALNVALAKLKIALKDVTIRFIVNDRDPSDNIVEVHLESIQLITTDANLRHINIENITISSIQKQAVPDSPVHPFNNDDLSQSVYLSKMEATSLYMSAMEEQSNEDPSEPQVTQEEQENDKCKESLMEINNLNIAFKGLSSVNDLRMSNIVIDIQDVHLAIHKIVEIKNSTLKNIIDIIVTHLDANESFSCQDSQSPSPDKQEPSALSSVDIKCIYLNLGQDITVILKSFKLEQKENNSLAFSLGSFYSNSSPLTISHKTKPLLTGEQTPQSIALNMGDELDIIISHDGIAHFFKIFQFVSKCMSFYQNKSKGMMPQIASDTKRTVQLTSKAVKLSLKFPYFLLCFQVSPFIYDSNRELYIELVDVFKKLPSRCTKILTMSSITISNLQSPLQLGSYDDTLKEALIYSSVHAIIKEVIFNEEYSGIVQLVEDISAFGKLFTDSKNSECTGKSKSKRGSFLQRSVRVLNSSRFVYKQSLSANFSLKIDSMKLKVSEIIGPQFGSVEALLSNNFFAITDDSQIVYFTKNLKVERKTPSLLEPQEIMSVVLNKAVNEPVLYVHRRANGKLKVIFNNIRIHYYARWLEILKKNIGPDNASSKDEPVSQKLSKKQPTSGFPWELKCLDCSLILHPFRLKSVMVIVLDNLTTGGSSFIPQAKLLSKANTLFLIDDYQNFKIQKDKNWPSLINFYAGQGFSAIGKIDTLNFLINKSDGALLLDCKIEQVGLSLCADSFQTFCQLCIDLKYPQTFPDEEKFRTQLKNPIDVFKDIDCDLFNSAFIRENNHQNDYDSVHLVDSFLDKTHEFNNGARSKLSSQGSYEMDSSSGTATGGILLPHESYLDSAQPKEEDTPPIASKEQERDVDIRGSIDVEKVVIKLFDGYDWKYTRKFIANTVEKLDKELSKAEASSSKSNVPQSEANIFDSIYISANKNNVTDLRRNLDGEIQGVQNSFSDVSKVNLRPSKHYKALIQLNKVHVNLKNYRVDEPDESNSDNSTDVLNRCVVSIYEFEIIDNVPTSTWNKFVTLLKHEPWPHSSPMFLLDLEFIRPIDFLQAVELVMQLNVAPLRLHVDQDTLEFLIRFLGFKDKRFELIDEYPDIVFIQKFSTNSIKLRLDYKPKKVDYAGLRSGQTSELMNFFTLDGSKIILKSVVLYGLNGFDELNNKLKAIWTPDITKKQLPGVLEGLAPVRSFMAIGSGVKTLVTVLMSEYRQEGHLGRSLKKGGNVFLKTTTGDFVKLGVKLTSGTQAILENTEELFGGVGSNGRVYDASKFGSADGADSDTAAVLDLDTLFEEDQLVGSKYSRIRDHEPTAVVIDMSSPGDHNEPTIVSLYADQPLDLPTGLKEAYSSLEKHMHIAYDAVWRAKGQMKDDKRGGPSAAAVYVARAAPVAIIRPLIGATEAVSKTLQGIANQVDKTHNEQINDKYKSNRTDS.

The ER-targeting domain stretch occupies residues 2–21; sequence AFWLPQNIQKRLLLYVLQQI. S236 carries the phosphoserine modification. Residue S249 is modified to Phosphoserine; by ATG1. The segment at 264–286 is disordered; the sequence is AMEEQSNEDPSEPQVTQEEQEND. Residues 1049–1075 adopt a coiled-coil conformation; that stretch reads TRKFIANTVEKLDKELSKAEASSSKSN. Residue S1086 is modified to Phosphoserine; by ATG1. The segment at 1347–1373 is PAS-targeting domain; the sequence is APVRSFMAIGSGVKTLVTVLMSEYRQE.

Belongs to the ATG2 family. In terms of assembly, interacts with ATG18. Interacts with ATG9.

It localises to the preautophagosomal structure membrane. It is found in the endoplasmic reticulum membrane. The catalysed reaction is a 1,2-diacyl-sn-glycero-3-phosphocholine(in) = a 1,2-diacyl-sn-glycero-3-phosphocholine(out). It catalyses the reaction a 1,2-diacyl-sn-glycero-3-phospho-L-serine(in) = a 1,2-diacyl-sn-glycero-3-phospho-L-serine(out). It carries out the reaction a 1,2-diacyl-sn-glycero-3-phosphoethanolamine(in) = a 1,2-diacyl-sn-glycero-3-phosphoethanolamine(out). Its function is as follows. Lipid transfer protein required for autophagosome completion and peroxisome degradation. Tethers the edge of the isolation membrane (IM) to the endoplasmic reticulum (ER) and mediates direct lipid transfer from ER to IM for IM expansion. ATG2 binds to the ER exit site (ERES), which is the membrane source for autophagosome formation, using basic residues in its N-terminal region (NR) and to the expanding edge of the IM through its C-terminal region. The latter binding is assisted by an ATG18-PtdIns3P interaction. ATG2 then extracts phospholipids from the membrane source using its NR and transfers them to ATG9 to the IM through its predicted beta-sheet-rich structure for membrane expansion. ATG2 is also involved in the recruitment of lipids to a restricted region close to the vacuole, termed the vacuole-isolation membrane contact site (VICS), which is also essential for autophagosome formation. Necessary for the localization of ATG18 to the preautophagosomal structure (PAS) and the binding of ATG18 to ATG9. ATG2 is the most downstream ATG protein in the preautophagosomal structure organization process. Involved in correct ATG9 trafficking through the preautophagosomal structure and in peroxisome degradation. Plays a significant role in life span extension. In Saccharomyces cerevisiae (strain ATCC 204508 / S288c) (Baker's yeast), this protein is Autophagy-related protein 2 (ATG2).